The chain runs to 188 residues: Elongation factor P (188 aa).

Belongs to the elongation factor P family.

The protein resides in the cytoplasm. It functions in the pathway protein biosynthesis; polypeptide chain elongation. Functionally, involved in peptide bond synthesis. Stimulates efficient translation and peptide-bond synthesis on native or reconstituted 70S ribosomes in vitro. Probably functions indirectly by altering the affinity of the ribosome for aminoacyl-tRNA, thus increasing their reactivity as acceptors for peptidyl transferase. In Rickettsia africae (strain ESF-5), this protein is Elongation factor P.